The primary structure comprises 85 residues: Conotoxin Lt28.7 (85 aa).

The signal sequence occupies residues 1-21; it reads MPKLEMMLLVLLILPLCYIDA. Positions 22–40 are excised as a propeptide; the sequence is VGPPPPWNMEDEIIEHWQE.

It belongs to the conotoxin D superfamily. Contains 5 disulfide bonds. In terms of tissue distribution, expressed by the venom duct.

Its subcellular location is the secreted. Its function is as follows. Probable neurotoxin. The protein is Conotoxin Lt28.7 of Conus litteratus (Lettered cone).